The primary structure comprises 417 residues: Serine hydroxymethyltransferase (417 aa).

Residues Leu121 and 125–127 (GHL) each bind (6S)-5,6,7,8-tetrahydrofolate. Lys230 is modified (N6-(pyridoxal phosphate)lysine). Glu245 contacts (6S)-5,6,7,8-tetrahydrofolate.

This sequence belongs to the SHMT family. In terms of assembly, homodimer. Requires pyridoxal 5'-phosphate as cofactor.

It localises to the cytoplasm. It carries out the reaction (6R)-5,10-methylene-5,6,7,8-tetrahydrofolate + glycine + H2O = (6S)-5,6,7,8-tetrahydrofolate + L-serine. The protein operates within one-carbon metabolism; tetrahydrofolate interconversion. It functions in the pathway amino-acid biosynthesis; glycine biosynthesis; glycine from L-serine: step 1/1. Functionally, catalyzes the reversible interconversion of serine and glycine with tetrahydrofolate (THF) serving as the one-carbon carrier. This reaction serves as the major source of one-carbon groups required for the biosynthesis of purines, thymidylate, methionine, and other important biomolecules. Also exhibits THF-independent aldolase activity toward beta-hydroxyamino acids, producing glycine and aldehydes, via a retro-aldol mechanism. This is Serine hydroxymethyltransferase from Desulfitobacterium hafniense (strain DSM 10664 / DCB-2).